Reading from the N-terminus, the 193-residue chain is Dense granule protein 2 (193 aa).

Asn-4 is a glycosylation site (N-linked (GlcNAc...) asparagine). A helical transmembrane segment spans residues 14–34 (FSPLTVVMLAVTLVAFMGVPL). Asn-74 is a glycosylation site (N-linked (GlcNAc...) asparagine). The interval 75–140 (SSELAGSRDK…APKPVPVRSA (66 aa)) is disordered. Residues 88–98 (EAEEEAAEVET) show a composition bias toward acidic residues. The helical transmembrane segment at 153–173 (HRVIGTAVIAAVVAALLWKFS) threads the bilayer. Residues 174–193 (RRRSGAPREGGENENGGEEK) are disordered.

It belongs to the Gra6 family.

Its subcellular location is the membrane. This Neospora caninum (Coccidian parasite) protein is Dense granule protein 2 (DG2).